A 683-amino-acid polypeptide reads, in one-letter code: Pre-mRNA-splicing factor CLF1 (683 aa).

13 HAT repeats span residues aspartate 40–glutamate 72, arginine 74–arginine 106, arginine 108–serine 140, glycine 142–arginine 173, glycine 175–lysine 206, serine 291–glutamate 323, alanine 336–threonine 367, leucine 374–arginine 407, glutamate 409–lysine 440, lysine 442–asparagine 474, glycine 476–aspartate 513, serine 515–serine 547, and glutamate 582–isoleucine 620.

It belongs to the crooked-neck family. Associated with the spliceosome.

It is found in the nucleus. Its function is as follows. Involved in pre-mRNA splicing and cell cycle progression. Required for the spliceosome assembly and initiation of the DNA replication. The protein is Pre-mRNA-splicing factor CLF1 (CLF1) of Eremothecium gossypii (strain ATCC 10895 / CBS 109.51 / FGSC 9923 / NRRL Y-1056) (Yeast).